Reading from the N-terminus, the 91-residue chain is Putative defensin-like protein 221 (91 aa).

A signal peptide spans 1-19; the sequence is MKTLFFFLTIAVLVSSCTS. Cystine bridges form between Cys-61-Cys-78, Cys-64-Cys-83, and Cys-68-Cys-85.

Belongs to the DEFL family.

The protein localises to the secreted. The polypeptide is Putative defensin-like protein 221 (Arabidopsis thaliana (Mouse-ear cress)).